The following is a 375-amino-acid chain: MADKQTVVVDNGSGVVKAGFSGEDAPRAVFPSIIGRPKNVSALIGVDSASEYIGDEAQQKRGVLKIFYPIEHGIIKDWEDMEKIWNHTFYVELRVQPDEHPVLLTEAPLNPKTNREKMTQIMFETFNVPALYVAIQAVLSLYSAGRTTGIVCDAGDGVTHTVPIYEGFSIPHAVSRIQLAGRDLTTFMAKLLTEKGYVFTSSAEMEIVRDIKEKLCFVALDYEAAMKQSYESTTFEKNYELPDGRVITIGNARFRCPEYLFKPLEMNGKELDSIQSLTYNSIQECDVDVRRDLYQNIILSGGTTMYEGIGERLLKEIEARAPKSINVKVIASPDRRFAVWRGGSTLTSLSTFASMWITKEDYDENGASIVHRKCL.

Belongs to the actin family.

It is found in the cytoplasm. The protein resides in the cytoskeleton. The catalysed reaction is ATP + H2O = ADP + phosphate + H(+). Actins are highly conserved proteins that are involved in various types of cell motility and are ubiquitously expressed in all eukaryotic cells. The protein is Actin, cytoplasmic (MIC-ACT-1) of Sterkiella nova (Ciliate).